A 529-amino-acid chain; its full sequence is Bifunctional purine biosynthesis protein PurH (529 aa).

The 148-residue stretch at methionine 1–valine 148 folds into the MGS-like domain.

Belongs to the PurH family.

It carries out the reaction (6R)-10-formyltetrahydrofolate + 5-amino-1-(5-phospho-beta-D-ribosyl)imidazole-4-carboxamide = 5-formamido-1-(5-phospho-D-ribosyl)imidazole-4-carboxamide + (6S)-5,6,7,8-tetrahydrofolate. It catalyses the reaction IMP + H2O = 5-formamido-1-(5-phospho-D-ribosyl)imidazole-4-carboxamide. The protein operates within purine metabolism; IMP biosynthesis via de novo pathway; 5-formamido-1-(5-phospho-D-ribosyl)imidazole-4-carboxamide from 5-amino-1-(5-phospho-D-ribosyl)imidazole-4-carboxamide (10-formyl THF route): step 1/1. Its pathway is purine metabolism; IMP biosynthesis via de novo pathway; IMP from 5-formamido-1-(5-phospho-D-ribosyl)imidazole-4-carboxamide: step 1/1. The chain is Bifunctional purine biosynthesis protein PurH from Shewanella amazonensis (strain ATCC BAA-1098 / SB2B).